Reading from the N-terminus, the 178-residue chain is TM2 domain-containing protein biscotti (178 aa).

The first 18 residues, 1–18 (MFPVLLLLLFFFAKETHQ), serve as a signal peptide directing secretion. At 19 to 99 (INVDCNELQM…YHLDTTLLLS (81 aa)) the chain is on the extracellular side. 2 N-linked (GlcNAc...) asparagine glycosylation sites follow: Asn69 and Asn75. The TM2 domain occupies 94 to 137 (TTLLLSVFLGMFGVDRFYLGYPGIGLLKFCTLGGMFLGQLIDIV). The helical transmembrane segment at 100–120 (VFLGMFGVDRFYLGYPGIGLL) threads the bilayer. The Cytoplasmic portion of the chain corresponds to 121-124 (KFCT). A helical transmembrane segment spans residues 125–145 (LGGMFLGQLIDIVLIALQVVG). Over 146–178 (PADGSAYVIPYYGAGIHIVRSDNTTYRLPRDDW) the chain is Extracellular. N-linked (GlcNAc...) asparagine glycosylation occurs at Asn168.

This sequence belongs to the TM2 family.

The protein localises to the membrane. In terms of biological role, positive regulator of Notch signaling. Maternal neurogenic factor involved in Notch signaling-dependent neuroectodermal specification during early embryogenesis. Functions cooperatively with amx/TM2D3 and amrt/TM2D2. The protein is TM2 domain-containing protein biscotti of Drosophila melanogaster (Fruit fly).